Consider the following 827-residue polypeptide: Copper-transporting ATPase 2 (827 aa).

HMA domains follow at residues 15-80 (VSTN…YAPR) and 82-148 (ATEE…YELR). The Cu cation site is built by Cys-26, Cys-29, Cys-93, and Cys-96. 6 helical membrane-spanning segments follow: residues 174 to 194 (VTISVLMTLPLFLMEMGSHFI), 210 to 230 (NLYLQFALATLVLFGPGLRFF), 246 to 266 (SLVVLGTTAAWGYSVVATFVP), 271 to 291 (SGTANVYYEAAAVIVTLVLLG), 430 to 450 (GWFVPAVILAAVLTFAAWYTF), and 458 to 478 (FALVNAVAVLIIACPCAMGLA). Asp-515 functions as the 4-aspartylphosphate intermediate in the catalytic mechanism. 2 residues coordinate Mg(2+): Asp-714 and Asp-718. The next 2 helical transmembrane spans lie at 771–793 (NLFWAFAYNVSLIPVAAGVLYPV) and 797–819 (LLSPIFAAAAMAMSSVFVLGNAL).

The protein belongs to the cation transport ATPase (P-type) (TC 3.A.3) family. Type IB subfamily.

The protein resides in the cell membrane. The catalysed reaction is Cu(2+)(in) + ATP + H2O = Cu(2+)(out) + ADP + phosphate + H(+). Functionally, involved in copper transport. The protein is Copper-transporting ATPase 2 (actP2) of Rhizobium meliloti (strain 1021) (Ensifer meliloti).